The sequence spans 182 residues: ATP-dependent protease subunit HslV (182 aa).

T7 is a catalytic residue. Na(+)-binding residues include A166, C169, and T172.

It belongs to the peptidase T1B family. HslV subfamily. A double ring-shaped homohexamer of HslV is capped on each side by a ring-shaped HslU homohexamer. The assembly of the HslU/HslV complex is dependent on binding of ATP.

Its subcellular location is the cytoplasm. It carries out the reaction ATP-dependent cleavage of peptide bonds with broad specificity.. Its activity is regulated as follows. Allosterically activated by HslU binding. Functionally, protease subunit of a proteasome-like degradation complex believed to be a general protein degrading machinery. The chain is ATP-dependent protease subunit HslV from Albidiferax ferrireducens (strain ATCC BAA-621 / DSM 15236 / T118) (Rhodoferax ferrireducens).